The sequence spans 142 residues: Large ribosomal subunit protein uL13 (142 aa).

Belongs to the universal ribosomal protein uL13 family. As to quaternary structure, part of the 50S ribosomal subunit.

Its function is as follows. This protein is one of the early assembly proteins of the 50S ribosomal subunit, although it is not seen to bind rRNA by itself. It is important during the early stages of 50S assembly. This is Large ribosomal subunit protein uL13 from Burkholderia cenocepacia (strain ATCC BAA-245 / DSM 16553 / LMG 16656 / NCTC 13227 / J2315 / CF5610) (Burkholderia cepacia (strain J2315)).